The primary structure comprises 200 residues: NADH-quinone oxidoreductase subunit C (200 aa).

It belongs to the complex I 30 kDa subunit family. In terms of assembly, NDH-1 is composed of 14 different subunits. Subunits NuoB, C, D, E, F, and G constitute the peripheral sector of the complex.

It is found in the cell inner membrane. It catalyses the reaction a quinone + NADH + 5 H(+)(in) = a quinol + NAD(+) + 4 H(+)(out). In terms of biological role, NDH-1 shuttles electrons from NADH, via FMN and iron-sulfur (Fe-S) centers, to quinones in the respiratory chain. The immediate electron acceptor for the enzyme in this species is believed to be ubiquinone. Couples the redox reaction to proton translocation (for every two electrons transferred, four hydrogen ions are translocated across the cytoplasmic membrane), and thus conserves the redox energy in a proton gradient. The chain is NADH-quinone oxidoreductase subunit C from Burkholderia ambifaria (strain MC40-6).